The sequence spans 205 residues: Glycerol-3-phosphate acyltransferase (205 aa).

4 helical membrane-spanning segments follow: residues 4-24, 80-100, 112-132, and 138-158; these read IAPGMILLAYLCGSISSAILV, PFWLGLIAIAACLGHIWPIFF, FGAIAPIGWDLTGVMAGTWLL, and GYSSLGAIVSALVAPFYVWWF.

It belongs to the PlsY family. As to quaternary structure, probably interacts with PlsX.

It is found in the cell inner membrane. It catalyses the reaction an acyl phosphate + sn-glycerol 3-phosphate = a 1-acyl-sn-glycero-3-phosphate + phosphate. The protein operates within lipid metabolism; phospholipid metabolism. Functionally, catalyzes the transfer of an acyl group from acyl-phosphate (acyl-PO(4)) to glycerol-3-phosphate (G3P) to form lysophosphatidic acid (LPA). This enzyme utilizes acyl-phosphate as fatty acyl donor, but not acyl-CoA or acyl-ACP. This is Glycerol-3-phosphate acyltransferase from Cronobacter sakazakii (strain ATCC BAA-894) (Enterobacter sakazakii).